Here is a 269-residue protein sequence, read N- to C-terminus: Phosphonoacetaldehyde hydrolase (269 aa).

The active-site Nucleophile is D10. Mg(2+) contacts are provided by D10 and A12. The Schiff-base intermediate with substrate role is filled by K52. D186 serves as a coordination point for Mg(2+).

This sequence belongs to the HAD-like hydrolase superfamily. PhnX family. Homodimer. Requires Mg(2+) as cofactor.

It catalyses the reaction phosphonoacetaldehyde + H2O = acetaldehyde + phosphate + H(+). Functionally, involved in phosphonate degradation. The sequence is that of Phosphonoacetaldehyde hydrolase from Klebsiella pneumoniae subsp. pneumoniae (strain ATCC 700721 / MGH 78578).